Reading from the N-terminus, the 333-residue chain is Testin-2 (333 aa).

The first 17 residues, 1–17 (MIAVLFLAILCLEVDST), serve as a signal peptide directing secretion. Intrachain disulfides connect cysteine 135–cysteine 178, cysteine 169–cysteine 211, and cysteine 269–cysteine 322. An N-linked (GlcNAc...) asparagine glycan is attached at asparagine 173. Residues histidine 276 and asparagine 300 contribute to the active site.

Belongs to the peptidase C1 family. As to expression, sertoli cells.

It is found in the secreted. This is Testin-2 (Testin) from Rattus norvegicus (Rat).